A 347-amino-acid polypeptide reads, in one-letter code: uncharacterized protein (347 aa).

This sequence belongs to the MG067/MG068/MG395 family.

This is an uncharacterized protein from Mycoplasma pneumoniae (strain ATCC 29342 / M129 / Subtype 1) (Mycoplasmoides pneumoniae).